Here is a 428-residue protein sequence, read N- to C-terminus: Histidinol dehydrogenase (428 aa).

Residues Tyr129, Gln188, and Asn211 each coordinate NAD(+). Substrate contacts are provided by Ser234, Gln256, and His259. Zn(2+)-binding residues include Gln256 and His259. Active-site proton acceptor residues include Glu323 and His324. Substrate contacts are provided by His324, Asp357, Glu411, and His416. Asp357 serves as a coordination point for Zn(2+). His416 contributes to the Zn(2+) binding site.

The protein belongs to the histidinol dehydrogenase family. The cofactor is Zn(2+).

It catalyses the reaction L-histidinol + 2 NAD(+) + H2O = L-histidine + 2 NADH + 3 H(+). The protein operates within amino-acid biosynthesis; L-histidine biosynthesis; L-histidine from 5-phospho-alpha-D-ribose 1-diphosphate: step 9/9. Catalyzes the sequential NAD-dependent oxidations of L-histidinol to L-histidinaldehyde and then to L-histidine. The chain is Histidinol dehydrogenase from Caulobacter vibrioides (strain ATCC 19089 / CIP 103742 / CB 15) (Caulobacter crescentus).